The following is a 237-amino-acid chain: Protein PetR (237 aa).

A Response regulatory domain is found at 8-121 (HLLIVDDDER…ELLLRINAIL (114 aa)). Asp-57 is modified (4-aspartylphosphate). Positions 77–95 (ATPILLLTARGETRERIEG) form a DNA-binding region, H-T-H motif. Residues 132-236 (PKYLSLGPLR…VRGLGYMLAP (105 aa)) constitute a DNA-binding region (ompR/PhoB-type).

Functionally, necessary for photosynthetic and respiratory growth. Probable promoter-specific protein mediating the interaction between DNA and RNA polymerase. The chain is Protein PetR (petR) from Rhodobacter capsulatus (strain ATCC BAA-309 / NBRC 16581 / SB1003).